Reading from the N-terminus, the 926-residue chain is Alpha-L-rhamnosidase (926 aa).

The signal sequence occupies residues 1–25; that stretch reads MILHKSVFKSYIYVLTYFVFFSVMS. Residue Cys-26 is the site of N-palmitoyl cysteine attachment. Cys-26 carries the S-diacylglycerol cysteine lipid modification. Alpha-L-rhamnose is bound by residues Asp-504, 508-510, Asp-517, and Trp-569; that span reads RDE. The active-site Proton donor is the Glu-510. Glu-779 (proton acceptor) is an active-site residue. Residue His-800 participates in alpha-L-rhamnose binding.

The protein belongs to the glycosyl hydrolase 78 family.

The protein resides in the cell membrane. It catalyses the reaction Hydrolysis of terminal non-reducing alpha-L-rhamnose residues in alpha-L-rhamnosides.. Functionally, alpha-L-rhamnosidase involved in ulvan degradation. Ulvan is the main polysaccharide component of the Ulvales (green seaweed) cell wall. It is composed of disaccharide building blocks comprising 3-sulfated rhamnose (Rha3S) linked to D-glucuronic acid (GlcA), L-iduronic acid (IduA), or D-xylose (Xyl). Alpha-L-rhamnosidase converts Rha-Xyl-Rha3S, the product of a sulfatase acting on Rha3S-Xyl-Rha3S oligosaccharides, to Rha and Xyl-Rha3S. The enzyme is able to degrade p-nitrophenyl-alpha-L-rhamnopyranoside (PNP-Rha) in vitro. The chain is Alpha-L-rhamnosidase from Formosa agariphila (strain DSM 15362 / KCTC 12365 / LMG 23005 / KMM 3901 / M-2Alg 35-1).